The following is a 317-amino-acid chain: tRNA dimethylallyltransferase (317 aa).

An ATP-binding site is contributed by 14–21; sequence GPTAVGKT. Residue 16–21 participates in substrate binding; it reads TAVGKT. The interaction with substrate tRNA stretch occupies residues 39–42; the sequence is DSMQ.

This sequence belongs to the IPP transferase family. In terms of assembly, monomer. Requires Mg(2+) as cofactor.

The catalysed reaction is adenosine(37) in tRNA + dimethylallyl diphosphate = N(6)-dimethylallyladenosine(37) in tRNA + diphosphate. In terms of biological role, catalyzes the transfer of a dimethylallyl group onto the adenine at position 37 in tRNAs that read codons beginning with uridine, leading to the formation of N6-(dimethylallyl)adenosine (i(6)A). This is tRNA dimethylallyltransferase from Bacillus mycoides (strain KBAB4) (Bacillus weihenstephanensis).